The primary structure comprises 179 residues: Macro domain-containing protein XAC3343 (179 aa).

The 175-residue stretch at 1 to 175 (MRIEVWQGDI…AYQQALATQE (175 aa)) folds into the Macro domain.

It belongs to the MacroD-type family.

This is Macro domain-containing protein XAC3343 from Xanthomonas axonopodis pv. citri (strain 306).